We begin with the raw amino-acid sequence, 210 residues long: MNYSDYFTNRPTDEITRDLVGRPLIYDNGKEKIGGYIVEAEAYMGKNDRTAHSYGGHRSPANEGLYRRGGTIYIYAQRQYFFFDVACQEENEPQGVLIRAIEPIWGIDTMIKNRSGKSGVLLTNGPAKMMQAFGIHDKNWNLHFLSDSPFKIDLEDDHRKPAQEIIADKRVGINQSDPVWANKKLRYYVAGNPYVSDMKKRNYAKNNGWA.

This sequence belongs to the DNA glycosylase MPG family.

In Lactobacillus helveticus (strain DPC 4571), this protein is Putative 3-methyladenine DNA glycosylase.